The sequence spans 387 residues: 4-hydroxy-3-methylbut-2-en-1-yl diphosphate synthase (flavodoxin) (387 aa).

[4Fe-4S] cluster is bound by residues C272, C275, C307, and E314.

The protein belongs to the IspG family. [4Fe-4S] cluster serves as cofactor.

The enzyme catalyses (2E)-4-hydroxy-3-methylbut-2-enyl diphosphate + oxidized [flavodoxin] + H2O + 2 H(+) = 2-C-methyl-D-erythritol 2,4-cyclic diphosphate + reduced [flavodoxin]. Its pathway is isoprenoid biosynthesis; isopentenyl diphosphate biosynthesis via DXP pathway; isopentenyl diphosphate from 1-deoxy-D-xylulose 5-phosphate: step 5/6. Converts 2C-methyl-D-erythritol 2,4-cyclodiphosphate (ME-2,4cPP) into 1-hydroxy-2-methyl-2-(E)-butenyl 4-diphosphate. This chain is 4-hydroxy-3-methylbut-2-en-1-yl diphosphate synthase (flavodoxin), found in Granulibacter bethesdensis (strain ATCC BAA-1260 / CGDNIH1).